The sequence spans 251 residues: Imidazole glycerol phosphate synthase subunit HisF (251 aa).

Residues aspartate 11 and aspartate 130 contribute to the active site.

This sequence belongs to the HisA/HisF family. In terms of assembly, heterodimer of HisH and HisF.

It localises to the cytoplasm. It carries out the reaction 5-[(5-phospho-1-deoxy-D-ribulos-1-ylimino)methylamino]-1-(5-phospho-beta-D-ribosyl)imidazole-4-carboxamide + L-glutamine = D-erythro-1-(imidazol-4-yl)glycerol 3-phosphate + 5-amino-1-(5-phospho-beta-D-ribosyl)imidazole-4-carboxamide + L-glutamate + H(+). It functions in the pathway amino-acid biosynthesis; L-histidine biosynthesis; L-histidine from 5-phospho-alpha-D-ribose 1-diphosphate: step 5/9. Its function is as follows. IGPS catalyzes the conversion of PRFAR and glutamine to IGP, AICAR and glutamate. The HisF subunit catalyzes the cyclization activity that produces IGP and AICAR from PRFAR using the ammonia provided by the HisH subunit. The polypeptide is Imidazole glycerol phosphate synthase subunit HisF (Chlorobaculum parvum (strain DSM 263 / NCIMB 8327) (Chlorobium vibrioforme subsp. thiosulfatophilum)).